Consider the following 307-residue polypeptide: Transaldolase (307 aa).

The active-site Schiff-base intermediate with substrate is the Lys125.

It belongs to the transaldolase family. Type 1 subfamily. In terms of assembly, homodimer.

It localises to the cytoplasm. The catalysed reaction is D-sedoheptulose 7-phosphate + D-glyceraldehyde 3-phosphate = D-erythrose 4-phosphate + beta-D-fructose 6-phosphate. It participates in carbohydrate degradation; pentose phosphate pathway; D-glyceraldehyde 3-phosphate and beta-D-fructose 6-phosphate from D-ribose 5-phosphate and D-xylulose 5-phosphate (non-oxidative stage): step 2/3. Transaldolase is important for the balance of metabolites in the pentose-phosphate pathway. The protein is Transaldolase of Pseudomonas aeruginosa (strain LESB58).